A 462-amino-acid polypeptide reads, in one-letter code: ATP synthase subunit beta 2 (462 aa).

151 to 158 (GGAGVGKT) is a binding site for ATP.

It belongs to the ATPase alpha/beta chains family. In terms of assembly, F-type ATPases have 2 components, CF(1) - the catalytic core - and CF(0) - the membrane proton channel. CF(1) has five subunits: alpha(3), beta(3), gamma(1), delta(1), epsilon(1). CF(0) has three main subunits: a(1), b(2) and c(9-12). The alpha and beta chains form an alternating ring which encloses part of the gamma chain. CF(1) is attached to CF(0) by a central stalk formed by the gamma and epsilon chains, while a peripheral stalk is formed by the delta and b chains.

The protein resides in the cell inner membrane. It carries out the reaction ATP + H2O + 4 H(+)(in) = ADP + phosphate + 5 H(+)(out). Functionally, produces ATP from ADP in the presence of a proton gradient across the membrane. The catalytic sites are hosted primarily by the beta subunits. This is ATP synthase subunit beta 2 from Chlorobaculum tepidum (strain ATCC 49652 / DSM 12025 / NBRC 103806 / TLS) (Chlorobium tepidum).